The primary structure comprises 187 residues: Protein Flattop (187 aa).

Positions T97–Q187 are disordered. The segment covering E122–T131 has biased composition (polar residues). Residues K169–Q187 show a composition bias toward basic and acidic residues.

It belongs to the Flattop family.

The protein resides in the cytoplasm. Its subcellular location is the cytoskeleton. It localises to the cilium basal body. The protein localises to the cell projection. It is found in the cilium. The protein resides in the apical cell membrane. Its subcellular location is the cilium axoneme. In terms of biological role, microtubule inner protein (MIP) part of the dynein-decorated doublet microtubules (DMTs) in cilia axoneme. Acts as a regulator of cilium basal body docking and positioning in mono- and multiciliated cells. Regulates basal body docking and cilia formation in multiciliated lung cells. Regulates kinocilium positioning and stereocilia bundle morphogenesis in the inner ear. The polypeptide is Protein Flattop (Salmo salar (Atlantic salmon)).